Reading from the N-terminus, the 92-residue chain is MSTLKMMLLILLLLLPMATFDSDGQAIPGGGIPSAVNSRVGGDEKSGRSLEKRCRSGKTCPRVGPDVCCERSDCFCKLVPARPFWRYRCICL.

A signal peptide spans 1–20 (MSTLKMMLLILLLLLPMATF). Positions 21-53 (DSDGQAIPGGGIPSAVNSRVGGDEKSGRSLEKR) are excised as a propeptide. The disordered stretch occupies residues 30–49 (GGIPSAVNSRVGGDEKSGRS).

The protein belongs to the conotoxin N superfamily. Contains 4 disulfide bonds. As to expression, expressed by the venom duct.

It localises to the secreted. This chain is Conotoxin Mr15.2, found in Conus marmoreus (Marble cone).